The chain runs to 295 residues: uncharacterized protein (295 aa).

Residues 151-290 (RTAVCARLSS…RAVAAAARAG (140 aa)) form the Resolvase/invertase-type recombinase catalytic domain. Catalysis depends on Ser159, which acts as the O-(5'-phospho-DNA)-serine intermediate.

This is an uncharacterized protein from Mycobacterium bovis (strain ATCC BAA-935 / AF2122/97).